The sequence spans 768 residues: Ral guanine nucleotide dissociation stimulator-like 1 (768 aa).

The N-terminal Ras-GEF domain maps to 65–196; the sequence is KIRTIKAGTL…RAQNLLEQFQ (132 aa). The Ras-GEF domain maps to 232 to 501; sequence SEDLVAEQLT…YALSCEIEAA (270 aa). Serine 520 is modified (phosphoserine). The interval 528-623 is disordered; that stretch reads MITSPTPTKE…PPSCNNNPKI (96 aa). Low complexity-rich tracts occupy residues 541-561, 586-596, and 605-621; these read STASGSSGESMDSVSVSSCES, ESSSSCSSIHS, and SSLINPLSSPPSCNNNP. The region spanning 648–735 is the Ras-associating domain; that stretch reads DTCIIRISVE…FDFILRKKNS (88 aa).

As to quaternary structure, interacts with Ras. As to expression, expressed in a wide variety of tissues with strong expression being seen in the heart, brain, kidney, spleen and testis.

In terms of biological role, probable guanine nucleotide exchange factor. The sequence is that of Ral guanine nucleotide dissociation stimulator-like 1 (RGL1) from Homo sapiens (Human).